The primary structure comprises 226 residues: Fibrillarin-like rRNA/tRNA 2'-O-methyltransferase (226 aa).

Residues 85–86, 104–105, 129–130, and 149–152 contribute to the S-adenosyl-L-methionine site; these read TT, EF, DA, and DVAQ.

It belongs to the methyltransferase superfamily. Fibrillarin family. Interacts with nop5. Component of box C/D small ribonucleoprotein (sRNP) particles that contain rpl7ae, FlpA and nop5, plus a guide RNA.

Its function is as follows. Involved in pre-rRNA and tRNA processing. Utilizes the methyl donor S-adenosyl-L-methionine to catalyze the site-specific 2'-hydroxyl methylation of ribose moieties in rRNA and tRNA. Site specificity is provided by a guide RNA that base pairs with the substrate. Methylation occurs at a characteristic distance from the sequence involved in base pairing with the guide RNA. The chain is Fibrillarin-like rRNA/tRNA 2'-O-methyltransferase from Thermococcus gammatolerans (strain DSM 15229 / JCM 11827 / EJ3).